The chain runs to 344 residues: Prickle-like protein 4 (344 aa).

The region spanning 1-81 (MSPQGPAVLS…ARLVLPKLEG (81 aa)) is the PET domain. LIM zinc-binding domains are found at residues 82–147 (HTCE…LLRP) and 148–207 (RCPA…RYSD). The interval 253–344 (GSSLQTQRGL…NASKTHCTMC (92 aa)) is disordered. Positions 257–271 (QTQRGLPGSSPQQEN) are enriched in polar residues. Over residues 272–296 (RPGDKAEAPKGQEQCRLETIRDPKD) the composition is skewed to basic and acidic residues. Over residues 322-344 (SWKTPGSLQAEDSNASKTHCTMC) the composition is skewed to polar residues.

It belongs to the prickle / espinas / testin family. In terms of tissue distribution, expressed in a broad range of normal tissues as well as in hepatocellular carcinoma, breast cancer and prostate cancer tissues.

This Homo sapiens (Human) protein is Prickle-like protein 4 (PRICKLE4).